A 321-amino-acid polypeptide reads, in one-letter code: Phospho-N-acetylmuramoyl-pentapeptide-transferase (321 aa).

9 helical membrane passes run 1-21 (MSLL…FALM), 53-73 (TMGG…VGGW), 77-97 (LQPT…LGFW), 110-130 (GLKA…LTLV), 145-165 (LGVW…LVGF), 174-194 (GLDG…AVIA), 200-220 (YNVM…FVYN), 226-248 (IFMG…ILLH), and 301-321 (IDIV…ATII).

The protein belongs to the glycosyltransferase 4 family. MraY subfamily. It depends on Mg(2+) as a cofactor.

Its subcellular location is the cell membrane. It carries out the reaction UDP-N-acetyl-alpha-D-muramoyl-L-alanyl-gamma-D-glutamyl-L-lysyl-D-alanyl-D-alanine + di-trans,octa-cis-undecaprenyl phosphate = Mur2Ac(oyl-L-Ala-gamma-D-Glu-L-Lys-D-Ala-D-Ala)-di-trans,octa-cis-undecaprenyl diphosphate + UMP. The protein operates within cell wall biogenesis; peptidoglycan biosynthesis. In terms of biological role, catalyzes the initial step of the lipid cycle reactions in the biosynthesis of the cell wall peptidoglycan: transfers peptidoglycan precursor phospho-MurNAc-pentapeptide from UDP-MurNAc-pentapeptide onto the lipid carrier undecaprenyl phosphate, yielding undecaprenyl-pyrophosphoryl-MurNAc-pentapeptide, known as lipid I. This Lactiplantibacillus plantarum (strain ATCC BAA-793 / NCIMB 8826 / WCFS1) (Lactobacillus plantarum) protein is Phospho-N-acetylmuramoyl-pentapeptide-transferase.